Reading from the N-terminus, the 477-residue chain is Bifunctional protein HldE (477 aa).

A ribokinase region spans residues 1 to 318; that stretch reads MKVTLPEFER…ENAVRGRADT (318 aa). N6-acetyllysine is present on lysine 179. An ATP-binding site is contributed by 195-198; the sequence is NLSE. Aspartate 264 is a catalytic residue. A cytidylyltransferase region spans residues 344 to 477; that stretch reads MTNGVFDILH…IKKIQQDKKG (134 aa).

This sequence in the N-terminal section; belongs to the carbohydrate kinase PfkB family. In the C-terminal section; belongs to the cytidylyltransferase family. As to quaternary structure, homodimer.

The catalysed reaction is D-glycero-beta-D-manno-heptose 7-phosphate + ATP = D-glycero-beta-D-manno-heptose 1,7-bisphosphate + ADP + H(+). It carries out the reaction D-glycero-beta-D-manno-heptose 1-phosphate + ATP + H(+) = ADP-D-glycero-beta-D-manno-heptose + diphosphate. It participates in nucleotide-sugar biosynthesis; ADP-L-glycero-beta-D-manno-heptose biosynthesis; ADP-L-glycero-beta-D-manno-heptose from D-glycero-beta-D-manno-heptose 7-phosphate: step 1/4. It functions in the pathway nucleotide-sugar biosynthesis; ADP-L-glycero-beta-D-manno-heptose biosynthesis; ADP-L-glycero-beta-D-manno-heptose from D-glycero-beta-D-manno-heptose 7-phosphate: step 3/4. Its pathway is bacterial outer membrane biogenesis; LPS core biosynthesis. Its function is as follows. Catalyzes the phosphorylation of D-glycero-D-manno-heptose 7-phosphate at the C-1 position to selectively form D-glycero-beta-D-manno-heptose-1,7-bisphosphate. In terms of biological role, catalyzes the ADP transfer from ATP to D-glycero-beta-D-manno-heptose 1-phosphate, yielding ADP-D-glycero-beta-D-manno-heptose. The sequence is that of Bifunctional protein HldE from Escherichia coli O157:H7.